The sequence spans 359 residues: Phospho-N-acetylmuramoyl-pentapeptide-transferase (359 aa).

10 helical membrane passes run 27–47 (IYALLTALVITIVLGPMMMRW), 73–93 (TMGGLLLGFGVLVSTLLWADL), 94–114 (TNIYVWLTMLVFAGFGLVGFV), 134–154 (LLGQLLVAGTAVGLLIMQPAY), 166–186 (FTPDLGWMYLPFALLVMIGAS), 197–217 (GLAIGPSITSATCYAFFIYIA), 233–253 (GVGEVTVFCGALVGAGLGFLW), 261–281 (LFMGDVGSLSIGGVLGFIAVL), 286–306 (LLLIIVGGVFVFETISVIMQV), and 336–356 (KIVIRFWVISILMALMALSTL).

Belongs to the glycosyltransferase 4 family. MraY subfamily. It depends on Mg(2+) as a cofactor.

It localises to the cell inner membrane. It catalyses the reaction UDP-N-acetyl-alpha-D-muramoyl-L-alanyl-gamma-D-glutamyl-meso-2,6-diaminopimeloyl-D-alanyl-D-alanine + di-trans,octa-cis-undecaprenyl phosphate = di-trans,octa-cis-undecaprenyl diphospho-N-acetyl-alpha-D-muramoyl-L-alanyl-D-glutamyl-meso-2,6-diaminopimeloyl-D-alanyl-D-alanine + UMP. The protein operates within cell wall biogenesis; peptidoglycan biosynthesis. Its function is as follows. Catalyzes the initial step of the lipid cycle reactions in the biosynthesis of the cell wall peptidoglycan: transfers peptidoglycan precursor phospho-MurNAc-pentapeptide from UDP-MurNAc-pentapeptide onto the lipid carrier undecaprenyl phosphate, yielding undecaprenyl-pyrophosphoryl-MurNAc-pentapeptide, known as lipid I. In Maridesulfovibrio salexigens (strain ATCC 14822 / DSM 2638 / NCIMB 8403 / VKM B-1763) (Desulfovibrio salexigens), this protein is Phospho-N-acetylmuramoyl-pentapeptide-transferase.